A 121-amino-acid chain; its full sequence is MSITKDQILEAFAAMSVMEVVELIEAMEEKFGVSAAAAVVSGGAEAAVVEEQTEFNVVLTAHGDNKVAVIKAIRGATGLGLKEAKAMSEAAPVAVKEGVSKEEAEALKKELTEAGASVEIK.

Belongs to the bacterial ribosomal protein bL12 family. Homodimer. Part of the ribosomal stalk of the 50S ribosomal subunit. Forms a multimeric L10(L12)X complex, where L10 forms an elongated spine to which 2 to 4 L12 dimers bind in a sequential fashion. Binds GTP-bound translation factors.

Its function is as follows. Forms part of the ribosomal stalk which helps the ribosome interact with GTP-bound translation factors. Is thus essential for accurate translation. This Shewanella baltica (strain OS185) protein is Large ribosomal subunit protein bL12.